We begin with the raw amino-acid sequence, 490 residues long: Glutamate--tRNA ligase (490 aa).

Residues 10–20 (PSPTGRMHVGN) carry the 'HIGH' region motif. C109, C111, C140, and H142 together coordinate Zn(2+). A 'KMSKS' region motif is present at residues 257-261 (KLSKR). Residue K260 participates in ATP binding.

It belongs to the class-I aminoacyl-tRNA synthetase family. Glutamate--tRNA ligase type 1 subfamily. As to quaternary structure, monomer. The cofactor is Zn(2+).

Its subcellular location is the cytoplasm. The enzyme catalyses tRNA(Glu) + L-glutamate + ATP = L-glutamyl-tRNA(Glu) + AMP + diphosphate. Its function is as follows. Catalyzes the attachment of glutamate to tRNA(Glu) in a two-step reaction: glutamate is first activated by ATP to form Glu-AMP and then transferred to the acceptor end of tRNA(Glu). This chain is Glutamate--tRNA ligase, found in Lachnoclostridium phytofermentans (strain ATCC 700394 / DSM 18823 / ISDg) (Clostridium phytofermentans).